We begin with the raw amino-acid sequence, 433 residues long: Xylose isomerase (433 aa).

Active-site residues include His-99 and Asp-102. Mg(2+) contacts are provided by Glu-230, Glu-266, His-269, Asp-294, Asp-305, Asp-307, and Asp-337.

It belongs to the xylose isomerase family. As to quaternary structure, homotetramer. Requires Mg(2+) as cofactor.

It is found in the cytoplasm. The catalysed reaction is alpha-D-xylose = alpha-D-xylulofuranose. This is Xylose isomerase from Cereibacter sphaeroides (strain ATCC 17023 / DSM 158 / JCM 6121 / CCUG 31486 / LMG 2827 / NBRC 12203 / NCIMB 8253 / ATH 2.4.1.) (Rhodobacter sphaeroides).